The primary structure comprises 133 residues: Large ribosomal subunit protein bL17 (133 aa).

This sequence belongs to the bacterial ribosomal protein bL17 family. Part of the 50S ribosomal subunit. Contacts protein L32.

This is Large ribosomal subunit protein bL17 from Verminephrobacter eiseniae (strain EF01-2).